Here is a 29-residue protein sequence, read N- to C-terminus: Small toxic protein TisB (29 aa).

Residues 6 to 28 (IAILILKLIVAALQLLDAVLKYL) traverse the membrane as a helical segment.

The protein resides in the cell inner membrane. Toxic component of a type I toxin-antitoxin (TA) system. Overexpression causes cessation of growth, induces stress-response, a number of membrane protein genes, and leads to cell death. Inhibits ATP synthesis, ATP levels drop drastically quickly after induction. Part of the programmed response to DNA damage; damage leads to increased accumulation of the protein which slows or stops bacterial growth, probably allowing DNA repair before cells continue to grow. This is Small toxic protein TisB (tisB) from Escherichia coli (strain K12).